The sequence spans 200 residues: Small ribosomal subunit protein uS2 (200 aa).

It belongs to the universal ribosomal protein uS2 family.

This is Small ribosomal subunit protein uS2 from Picrophilus torridus (strain ATCC 700027 / DSM 9790 / JCM 10055 / NBRC 100828 / KAW 2/3).